We begin with the raw amino-acid sequence, 156 residues long: Small ribosomal subunit protein uS7 (156 aa).

The protein belongs to the universal ribosomal protein uS7 family. Part of the 30S ribosomal subunit. Contacts proteins S9 and S11.

One of the primary rRNA binding proteins, it binds directly to 16S rRNA where it nucleates assembly of the head domain of the 30S subunit. Is located at the subunit interface close to the decoding center, probably blocks exit of the E-site tRNA. The sequence is that of Small ribosomal subunit protein uS7 from Blochmanniella pennsylvanica (strain BPEN).